A 175-amino-acid chain; its full sequence is Transcriptional repressor NrdR (175 aa).

The segment at 3 to 32 is a zinc-finger region; sequence CPYCSHPDTKVIDSRDVDDGVRRRRECVVC. The 91-residue stretch at 47 to 137 folds into the ATP-cone domain; sequence LFVVKKDQRR…VYREFTDITQ (91 aa).

Belongs to the NrdR family. Requires Zn(2+) as cofactor.

Negatively regulates transcription of bacterial ribonucleotide reductase nrd genes and operons by binding to NrdR-boxes. In Dehalococcoides mccartyi (strain ATCC BAA-2266 / KCTC 15142 / 195) (Dehalococcoides ethenogenes (strain 195)), this protein is Transcriptional repressor NrdR.